Reading from the N-terminus, the 426-residue chain is Glutamate-1-semialdehyde 2,1-aminomutase (426 aa).

Residue lysine 265 is modified to N6-(pyridoxal phosphate)lysine.

Belongs to the class-III pyridoxal-phosphate-dependent aminotransferase family. HemL subfamily. Homodimer. Pyridoxal 5'-phosphate serves as cofactor.

It is found in the cytoplasm. It catalyses the reaction (S)-4-amino-5-oxopentanoate = 5-aminolevulinate. Its pathway is porphyrin-containing compound metabolism; protoporphyrin-IX biosynthesis; 5-aminolevulinate from L-glutamyl-tRNA(Glu): step 2/2. This Hahella chejuensis (strain KCTC 2396) protein is Glutamate-1-semialdehyde 2,1-aminomutase.